Reading from the N-terminus, the 250-residue chain is 1-(5-phosphoribosyl)-5-[(5-phosphoribosylamino)methylideneamino] imidazole-4-carboxamide isomerase (250 aa).

Residue D8 is the Proton acceptor of the active site. The active-site Proton donor is D129.

Belongs to the HisA/HisF family.

The protein localises to the cytoplasm. It catalyses the reaction 1-(5-phospho-beta-D-ribosyl)-5-[(5-phospho-beta-D-ribosylamino)methylideneamino]imidazole-4-carboxamide = 5-[(5-phospho-1-deoxy-D-ribulos-1-ylimino)methylamino]-1-(5-phospho-beta-D-ribosyl)imidazole-4-carboxamide. It functions in the pathway amino-acid biosynthesis; L-histidine biosynthesis; L-histidine from 5-phospho-alpha-D-ribose 1-diphosphate: step 4/9. The chain is 1-(5-phosphoribosyl)-5-[(5-phosphoribosylamino)methylideneamino] imidazole-4-carboxamide isomerase from Desulfatibacillum aliphaticivorans.